A 300-amino-acid chain; its full sequence is MKKIKCALIGSGNIGTDLLYKLKRSEILEPVWMVGIDPDSEGLARARELGIKTTADGIDGLIPHIEADEIKIAFDATSAYVHGENSAKVNAKGVLMIDLTPAAIGPFCVPPVNLNQLNADIKNVNMVTCGGQATIPMVAAVSRVQPVEYGEIVATVSSKSVGPGTRQNIDEFTRTTSGAVEQIGGAKKGKAIIIINPAEPPLLMRDTIHCLTETEPDQAAITASVHEMIAEVQKYVPGYKLKNGPVFDGRKVSIFLEVEGLGDYLPKYAGNLDIMTASAARTAEMFALQMLGQSPSDSQS.

11 to 14 (SGNI) lines the NAD(+) pocket. C129 serves as the catalytic Acyl-thioester intermediate. NAD(+)-binding positions include 160-168 (SVGPGTRQN) and N271.

Belongs to the acetaldehyde dehydrogenase family.

It carries out the reaction acetaldehyde + NAD(+) + CoA = acetyl-CoA + NADH + H(+). In Pseudoalteromonas translucida (strain TAC 125), this protein is Acetaldehyde dehydrogenase (mhpF).